A 299-amino-acid chain; its full sequence is Protease HtpX homolog (299 aa).

2 helical membrane-spanning segments follow: residues 7–24 (GILM…GALI) and 29–46 (GAII…FTFW). A Zn(2+)-binding site is contributed by H130. Residue E131 is part of the active site. Position 134 (H134) interacts with Zn(2+). A run of 2 helical transmembrane segments spans residues 145 to 165 (VTAT…FFGG) and 174 to 194 (PVGI…AGLV). Residue E203 participates in Zn(2+) binding.

The protein belongs to the peptidase M48B family. Requires Zn(2+) as cofactor.

It is found in the cell inner membrane. The protein is Protease HtpX homolog of Cereibacter sphaeroides (strain ATCC 17025 / ATH 2.4.3) (Rhodobacter sphaeroides).